The following is a 504-amino-acid chain: Ectoine/proline transporter ProP (504 aa).

11 helical membrane passes run 41-61 (FMEW…TAVF), 71-91 (LLAV…GGLV), 118-138 (LIGL…LLYL), 169-189 (FFGA…ASVV), 207-227 (DFGW…AVYL), 272-292 (LLIG…LTSY), 309-329 (AAVT…VGMW), 337-357 (PVYA…FLIM), 362-382 (IGAV…YVAL), 399-419 (GMGI…PLIT), and 430-450 (IVPA…LLFM). Positions 477 to 504 (NQDEDPNIDLSHMPFPDEENVGAEKQNA) are disordered.

It belongs to the major facilitator superfamily.

Its subcellular location is the cell membrane. With respect to regulation, uptake is activated by osmotic stress. Inhibited by CCCP. In terms of biological role, involved in the uptake of osmoprotectants. Can transport ectoine and proline. Protons are probably the coupling ions. The polypeptide is Ectoine/proline transporter ProP (Corynebacterium glutamicum (strain ATCC 13032 / DSM 20300 / JCM 1318 / BCRC 11384 / CCUG 27702 / LMG 3730 / NBRC 12168 / NCIMB 10025 / NRRL B-2784 / 534)).